Consider the following 247-residue polypeptide: Carboxy-S-adenosyl-L-methionine synthase (247 aa).

Residues Y40, 65-67, 90-91, 122-123, N137, and R204 contribute to the S-adenosyl-L-methionine site; these read GSS, DN, and DI.

Belongs to the class I-like SAM-binding methyltransferase superfamily. Cx-SAM synthase family. As to quaternary structure, homodimer.

The enzyme catalyses prephenate + S-adenosyl-L-methionine = carboxy-S-adenosyl-L-methionine + 3-phenylpyruvate + H2O. Catalyzes the conversion of S-adenosyl-L-methionine (SAM) to carboxy-S-adenosyl-L-methionine (Cx-SAM). The polypeptide is Carboxy-S-adenosyl-L-methionine synthase (Pseudomonas fluorescens (strain ATCC BAA-477 / NRRL B-23932 / Pf-5)).